The primary structure comprises 425 residues: DNA-directed RNA polymerase I subunit rpa49 (425 aa).

The tract at residues 1 to 26 is disordered; that stretch reads MAGDELKGKKRKYRDSHSGDEKSVKI. Over residues 15–24 the composition is skewed to basic and acidic residues; that stretch reads DSHSGDEKSV.

This sequence belongs to the eukaryotic RPA49/POLR1E RNA polymerase subunit family. In terms of assembly, component of the RNA polymerase I (Pol I) complex consisting of 14 subunits.

Its subcellular location is the nucleus. The protein resides in the nucleolus. Functionally, DNA-dependent RNA polymerase catalyzes the transcription of DNA into RNA using the four ribonucleoside triphosphates as substrates. Component of RNA polymerase I which synthesizes ribosomal RNA precursors. This chain is DNA-directed RNA polymerase I subunit rpa49 (rpa49), found in Schizosaccharomyces pombe (strain 972 / ATCC 24843) (Fission yeast).